A 1243-amino-acid polypeptide reads, in one-letter code: ATP-dependent helicase/nuclease subunit A (1243 aa).

Positions 2-475 (VNWTKEQEEA…IDLARNFRSR (474 aa)) constitute a UvrD-like helicase ATP-binding domain. Residue 23–30 (AAAGSGKT) coordinates ATP. The UvrD-like helicase C-terminal domain maps to 502–803 (AAELIYGNKM…RIMTIHKSKG (302 aa)).

It belongs to the helicase family. AddA subfamily. As to quaternary structure, heterodimer of AddA and AddB/RexB. Mg(2+) is required as a cofactor.

The catalysed reaction is Couples ATP hydrolysis with the unwinding of duplex DNA by translocating in the 3'-5' direction.. It catalyses the reaction ATP + H2O = ADP + phosphate + H(+). Functionally, the heterodimer acts as both an ATP-dependent DNA helicase and an ATP-dependent, dual-direction single-stranded exonuclease. Recognizes the chi site generating a DNA molecule suitable for the initiation of homologous recombination. The AddA nuclease domain is required for chi fragment generation; this subunit has the helicase and 3' -&gt; 5' nuclease activities. This is ATP-dependent helicase/nuclease subunit A from Oceanobacillus iheyensis (strain DSM 14371 / CIP 107618 / JCM 11309 / KCTC 3954 / HTE831).